The following is a 464-amino-acid chain: Ribulose bisphosphate carboxylase/oxygenase activase A, chloroplastic (464 aa).

A chloroplast-targeting transit peptide spans 1 to 48 (MAAAFSSTVGAPASTPTNFLGKKLKKQVTSAVNYHGKSSKANRFTVMA). 155-162 (GGKGQGKS) lines the ATP pocket.

Belongs to the RuBisCO activase family.

It localises to the plastid. The protein resides in the chloroplast stroma. Its function is as follows. Activation of RuBisCO (ribulose-1,5-bisphosphate carboxylase/oxygenase; EC 4.1.1.39) involves the ATP-dependent carboxylation of the epsilon-amino group of lysine leading to a carbamate structure. The protein is Ribulose bisphosphate carboxylase/oxygenase activase A, chloroplastic (RCAA) of Hordeum vulgare (Barley).